A 279-amino-acid polypeptide reads, in one-letter code: uncharacterized protein (279 aa).

Residues 1–21 form the signal peptide; it reads MKIIRTLFLLLIAVYGSSVVA.

The protein to E.coli YfcO.

This is an uncharacterized protein from Salmonella typhimurium (strain LT2 / SGSC1412 / ATCC 700720).